The sequence spans 1185 residues: Ubiquitin carboxyl-terminal hydrolase 36 (1185 aa).

Residues 126 to 169 (TGKALSSNGHDNTNGVNGSSAATVNGNRKQTVEQSNQNSTTNPN) show a composition bias toward polar residues. Positions 126–174 (TGKALSSNGHDNTNGVNGSSAATVNGNRKQTVEQSNQNSTTNPNELPKP) are disordered. The USP domain maps to 199–509 (AGMLNVGNTC…NAYIMFYELD (311 aa)). Cys-208 acts as the Nucleophile in catalysis. Catalysis depends on His-468, which acts as the Proton acceptor. Ser-552 and Ser-554 each carry phosphoserine. The span at 642–658 (ANSNKSSCNNNTLTTNS) shows a compositional bias: low complexity. Disordered regions lie at residues 642–804 (ANSN…TDAI), 818–975 (HRAT…YQSE), 1056–1122 (APTL…GSFP), and 1136–1185 (NKFK…QQQS). Acidic residues predominate over residues 670-683 (SDEEDEDEDSDDDV). At Thr-716 the chain carries Phosphothreonine. 2 positions are modified to phosphoserine: Ser-726 and Ser-728. Composition is skewed to low complexity over residues 778 to 797 (KSNG…SNNN) and 836 to 853 (QQQQ…SLIS). Ser-867 bears the Phosphoserine mark. Residue Thr-870 is modified to Phosphothreonine. Phosphoserine is present on Ser-873. The span at 891–920 (DDNDDDDEDADEEDDADADAEQEEYDDEVV) shows a compositional bias: acidic residues. Composition is skewed to polar residues over residues 924–942 (TTPS…SKPS) and 959–975 (SAKS…YQSE). A Phosphothreonine modification is found at Thr-925. The span at 1062-1071 (EAREQRKRDA) shows a compositional bias: basic and acidic residues. Composition is skewed to low complexity over residues 1151 to 1161 (QQQRALQRHLA) and 1172 to 1185 (QSTG…QQQS).

The protein belongs to the peptidase C19 family. As to quaternary structure, interacts with atms/PAF1, but not with CycT.

The protein localises to the nucleus. The protein resides in the nucleolus. The enzyme catalyses Thiol-dependent hydrolysis of ester, thioester, amide, peptide and isopeptide bonds formed by the C-terminal Gly of ubiquitin (a 76-residue protein attached to proteins as an intracellular targeting signal).. In terms of biological role, required for maintaining multiple types of adult stem cells, including male and female germline, epithelial follicle cell and intestinal stem cells. May function as a transcriptional repressor by continually deubiquiting histone H2B at the promoters of genes critical for cellular differentiation, thereby preventing histone H3 'Lys-4' trimethylation (H3K4). Controls selective autophagy activation by ubiquitinated proteins. This Drosophila mojavensis (Fruit fly) protein is Ubiquitin carboxyl-terminal hydrolase 36 (Usp36).